We begin with the raw amino-acid sequence, 281 residues long: Nucleotide-binding protein Daro_0070 (281 aa).

8-15 (GLSGSGKS) contributes to the ATP binding site. 57-60 (DARS) contributes to the GTP binding site.

It belongs to the RapZ-like family.

In terms of biological role, displays ATPase and GTPase activities. In Dechloromonas aromatica (strain RCB), this protein is Nucleotide-binding protein Daro_0070.